The sequence spans 256 residues: Small ribosomal subunit protein uS2 (256 aa).

This sequence belongs to the universal ribosomal protein uS2 family.

This is Small ribosomal subunit protein uS2 from Brucella melitensis biotype 1 (strain ATCC 23456 / CCUG 17765 / NCTC 10094 / 16M).